The primary structure comprises 151 residues: uncharacterized protein (151 aa).

A disordered region spans residues 48 to 151 (RPPGWQPPVN…SKFDHTRKKF (104 aa)). A compositionally biased stretch (polar residues) spans 55–77 (PVNTGPTSPVSINASNAAPSNLK). Composition is skewed to low complexity over residues 85–105 (PRRL…RLPS) and 123–141 (KSPS…SLLR).

This is an uncharacterized protein from Schizosaccharomyces pombe (strain 972 / ATCC 24843) (Fission yeast).